Here is a 152-residue protein sequence, read N- to C-terminus: Large ribosomal subunit protein uL15 (152 aa).

Positions 1–57 are disordered; sequence MTSTLNTLKSNSGSRKKKLRKGRGIAAGQGASCGFGMRGQKSRSGRPTRPGFEGGQM. Residues 14–23 are compositionally biased toward basic residues; it reads SRKKKLRKGR. Residues 25 to 37 show a composition bias toward gly residues; sequence IAAGQGASCGFGM.

It belongs to the universal ribosomal protein uL15 family. As to quaternary structure, part of the 50S ribosomal subunit.

Functionally, binds to the 23S rRNA. This Prochlorococcus marinus (strain MIT 9312) protein is Large ribosomal subunit protein uL15.